Consider the following 579-residue polypeptide: General transcriptional corepressor tupA (579 aa).

Residues 83 to 101 (NINASQRDLNSPSTFRSNS) are compositionally biased toward polar residues. The disordered stretch occupies residues 83–258 (NINASQRDLN…ENGKEKGTDW (176 aa)). 3 stretches are compositionally biased toward low complexity: residues 109-128 (NNNNNNIINNNNNNNNNNNN), 157-198 (QQPG…LSPL), and 207-224 (MGNNMSGNSMSMNNNNNN). Residues 227–256 (KKPDMEEVKEEDRRRHDTEMSEENGKEKGT) are compositionally biased toward basic and acidic residues. WD repeat units follow at residues 279–319 (QHNS…HAFV), 325–364 (DGDLYIRSVCFSPDGNYLATGAEDKTVKVWDIHTKKIQHT), 367–406 (GHELDIYSLDYSSDGRFIVSGSGDKKAKIWDIEKGKCAFT), 413–452 (GPKNGVTSVAMSPDGRLVAAGSLDNIVRLWDAQTGYFLER), 455–494 (GHLDSVYSVAFSPDGKSLASGSLDKSLKLWDLSGSRSRSR), 501–540 (GHKDFVLSVAFSPDGSWLISGSKDRSVQFWDPRNGTTHMM), and 543–579 (GHKNSVISVALSPKNNSHGVFATGSGDFRSRLWKYDS).

Belongs to the WD repeat TUP1 family. As to quaternary structure, associates with trfA to form the trfA-tupA corepressor complex.

Its subcellular location is the nucleus. Functionally, acts as a component of the trfA-tupA corepressor complex which is involved in the repression of many genes in a wide variety of physiological processes. May also be involved in the derepression of at least some target genes. The complex is recruited to target genes by interaction with DNA-bound transcriptional repressors. The complex recruits histone deacetylases to produce a repressive chromatin structure, interacts with hypoacetylated N-terminal tails of histones H3 and H4 that have been programmed for repression by the action of histone deacetylases and interferes directly with the transcriptional machinery by associating with the RNA polymerase II mediator complex. This chain is General transcriptional corepressor tupA (tupA), found in Dictyostelium discoideum (Social amoeba).